The following is a 158-amino-acid chain: MTICFLLFSSYYFSNISPQNPLFKKNFLQQLSPQGFGFYSKSPTEENISFHTKENLKLPNALPNNFFGIKREGRVQAIELGKIVENIDPKNWKTCENNNSCTNLEKQIKPIKVIKNEDYIHLSKGEYLIYRQKPLSWYWIDFKQTTSFERKVLKIKIV.

The protein localises to the cytoplasm. Its function is as follows. Required for the maturation of SdpC to SDP. Not required for SdpC signal peptide cleavage, secretion from the cell or disulfide bond formation. This Bacillus subtilis (strain 168) protein is Sporulation-delaying protein SdpA.